The following is a 299-amino-acid chain: Phosphoribosylaminoimidazole-succinocarboxamide synthase (299 aa).

This sequence belongs to the SAICAR synthetase family.

It catalyses the reaction 5-amino-1-(5-phospho-D-ribosyl)imidazole-4-carboxylate + L-aspartate + ATP = (2S)-2-[5-amino-1-(5-phospho-beta-D-ribosyl)imidazole-4-carboxamido]succinate + ADP + phosphate + 2 H(+). It participates in purine metabolism; IMP biosynthesis via de novo pathway; 5-amino-1-(5-phospho-D-ribosyl)imidazole-4-carboxamide from 5-amino-1-(5-phospho-D-ribosyl)imidazole-4-carboxylate: step 1/2. This Desulfatibacillum aliphaticivorans protein is Phosphoribosylaminoimidazole-succinocarboxamide synthase.